Consider the following 223-residue polypeptide: Thiamine-phosphate synthase (223 aa).

4-amino-2-methyl-5-(diphosphooxymethyl)pyrimidine is bound by residues 45 to 49 (QYREK) and Asn77. Residues Asp78 and Asp97 each contribute to the Mg(2+) site. Thr116 is a 4-amino-2-methyl-5-(diphosphooxymethyl)pyrimidine binding site. Residue 142–144 (SYT) coordinates 2-[(2R,5Z)-2-carboxy-4-methylthiazol-5(2H)-ylidene]ethyl phosphate. Residue Lys145 coordinates 4-amino-2-methyl-5-(diphosphooxymethyl)pyrimidine. Residues Gly173 and 193-194 (VT) contribute to the 2-[(2R,5Z)-2-carboxy-4-methylthiazol-5(2H)-ylidene]ethyl phosphate site.

This sequence belongs to the thiamine-phosphate synthase family. Mg(2+) serves as cofactor.

The enzyme catalyses 2-[(2R,5Z)-2-carboxy-4-methylthiazol-5(2H)-ylidene]ethyl phosphate + 4-amino-2-methyl-5-(diphosphooxymethyl)pyrimidine + 2 H(+) = thiamine phosphate + CO2 + diphosphate. It carries out the reaction 2-(2-carboxy-4-methylthiazol-5-yl)ethyl phosphate + 4-amino-2-methyl-5-(diphosphooxymethyl)pyrimidine + 2 H(+) = thiamine phosphate + CO2 + diphosphate. It catalyses the reaction 4-methyl-5-(2-phosphooxyethyl)-thiazole + 4-amino-2-methyl-5-(diphosphooxymethyl)pyrimidine + H(+) = thiamine phosphate + diphosphate. Its pathway is cofactor biosynthesis; thiamine diphosphate biosynthesis; thiamine phosphate from 4-amino-2-methyl-5-diphosphomethylpyrimidine and 4-methyl-5-(2-phosphoethyl)-thiazole: step 1/1. Condenses 4-methyl-5-(beta-hydroxyethyl)thiazole monophosphate (THZ-P) and 2-methyl-4-amino-5-hydroxymethyl pyrimidine pyrophosphate (HMP-PP) to form thiamine monophosphate (TMP). The polypeptide is Thiamine-phosphate synthase (Dictyoglomus turgidum (strain DSM 6724 / Z-1310)).